A 414-amino-acid polypeptide reads, in one-letter code: Protein SOSEKI 2 (414 aa).

The segment at Arg44–Asp135 is DIX-like oligomerization domain. Residues Ser171–Arg273 form a disordered region. Over residues Asp173 to Leu192 the composition is skewed to acidic residues. Over residues Pro205–Lys229 the composition is skewed to polar residues. The segment covering Thr230–Asp242 has biased composition (basic and acidic residues). An Association to cell membranes motif is present at residues Cys283–Gly284.

The protein belongs to the SOSEKI family. As to quaternary structure, homodimer. Forms long polymer filaments with other SOKs proteins polymers (e.g. SOK1, SOK2, SOK3 and SOK4) crucial for polar localization and biological activity. Binds to ANGUSTIFOLIA (AN). Expressed during embryogenesis and in roots.

It localises to the cell membrane. In terms of biological role, part of a three-gene cluster containing FLC, UFC and DFC, which is coordinately regulated in response to vernalization. Also regulated by FLX. SOSEKI proteins (SOK1-5) locally interpret global polarity cues and can influence cell division orientation to coordinate cell polarization relative to body axes, probably by guiding ANGUSTIFOLIA (AN) polarized localization. This Arabidopsis thaliana (Mouse-ear cress) protein is Protein SOSEKI 2.